The following is a 502-amino-acid chain: Arginine decarboxylase (502 aa).

N6-(pyridoxal phosphate)lysine is present on K42. 226–236 (IDIGGGLGIDY) lines the substrate pocket.

It belongs to the Orn/Lys/Arg decarboxylase class-II family. SpeA subfamily. Pyridoxal 5'-phosphate is required as a cofactor. Mg(2+) serves as cofactor.

It catalyses the reaction L-arginine + H(+) = agmatine + CO2. The protein operates within amine and polyamine biosynthesis; agmatine biosynthesis; agmatine from L-arginine: step 1/1. This Solanum lycopersicum (Tomato) protein is Arginine decarboxylase.